The following is an 884-amino-acid chain: Alanine--tRNA ligase (884 aa).

Zn(2+)-binding residues include H565, H569, C674, and H678.

This sequence belongs to the class-II aminoacyl-tRNA synthetase family. Zn(2+) is required as a cofactor.

The protein resides in the cytoplasm. The catalysed reaction is tRNA(Ala) + L-alanine + ATP = L-alanyl-tRNA(Ala) + AMP + diphosphate. Its function is as follows. Catalyzes the attachment of alanine to tRNA(Ala) in a two-step reaction: alanine is first activated by ATP to form Ala-AMP and then transferred to the acceptor end of tRNA(Ala). Also edits incorrectly charged Ser-tRNA(Ala) and Gly-tRNA(Ala) via its editing domain. The polypeptide is Alanine--tRNA ligase (Xanthobacter autotrophicus (strain ATCC BAA-1158 / Py2)).